The following is a 556-amino-acid chain: 2-succinyl-5-enolpyruvyl-6-hydroxy-3-cyclohexene-1-carboxylate synthase (556 aa).

It belongs to the TPP enzyme family. MenD subfamily. In terms of assembly, homodimer. Requires Mg(2+) as cofactor. The cofactor is Mn(2+). Thiamine diphosphate serves as cofactor.

The enzyme catalyses isochorismate + 2-oxoglutarate + H(+) = 5-enolpyruvoyl-6-hydroxy-2-succinyl-cyclohex-3-ene-1-carboxylate + CO2. The protein operates within quinol/quinone metabolism; 1,4-dihydroxy-2-naphthoate biosynthesis; 1,4-dihydroxy-2-naphthoate from chorismate: step 2/7. It functions in the pathway quinol/quinone metabolism; menaquinone biosynthesis. Catalyzes the thiamine diphosphate-dependent decarboxylation of 2-oxoglutarate and the subsequent addition of the resulting succinic semialdehyde-thiamine pyrophosphate anion to isochorismate to yield 2-succinyl-5-enolpyruvyl-6-hydroxy-3-cyclohexene-1-carboxylate (SEPHCHC). The protein is 2-succinyl-5-enolpyruvyl-6-hydroxy-3-cyclohexene-1-carboxylate synthase of Shigella boydii serotype 4 (strain Sb227).